Here is a 119-residue protein sequence, read N- to C-terminus: Large ribosomal subunit protein uL14c (119 aa).

It belongs to the universal ribosomal protein uL14 family. Part of the 50S ribosomal subunit.

It is found in the plastid. The protein localises to the chloroplast. In terms of biological role, binds to 23S rRNA. This chain is Large ribosomal subunit protein uL14c, found in Ostreococcus tauri.